Here is a 419-residue protein sequence, read N- to C-terminus: UDP-N-acetylglucosamine 1-carboxyvinyltransferase 2 (419 aa).

Residue 22–23 participates in phosphoenolpyruvate binding; that stretch reads KN. A UDP-N-acetyl-alpha-D-glucosamine-binding site is contributed by R92. C116 functions as the Proton donor in the catalytic mechanism. C116 bears the 2-(S-cysteinyl)pyruvic acid O-phosphothioketal mark. Residues 121–125, D306, and I328 contribute to the UDP-N-acetyl-alpha-D-glucosamine site; that span reads RPIDL.

It belongs to the EPSP synthase family. MurA subfamily.

The protein localises to the cytoplasm. It catalyses the reaction phosphoenolpyruvate + UDP-N-acetyl-alpha-D-glucosamine = UDP-N-acetyl-3-O-(1-carboxyvinyl)-alpha-D-glucosamine + phosphate. It participates in cell wall biogenesis; peptidoglycan biosynthesis. Cell wall formation. Adds enolpyruvyl to UDP-N-acetylglucosamine. The sequence is that of UDP-N-acetylglucosamine 1-carboxyvinyltransferase 2 from Streptococcus pyogenes serotype M18 (strain MGAS8232).